A 1483-amino-acid chain; its full sequence is Guanylyl cyclase, membrane (1483 aa).

Transmembrane regions (helical) follow at residues 50–70 (ISII…YISP), 143–163 (FILR…TFTA), 168–188 (LWKL…LIFE), 198–218 (MVLL…PSML), 219–239 (ASGG…QIAG), and 242–262 (MVLL…ISRF). Residues 323 to 376 (KKDEESNLTGKKQSKVVVSPPPPPTAAAPQQQDNEISTPQNSRKIVDPQSPSSL) are disordered. Residues 355-376 (DNEISTPQNSRKIVDPQSPSSL) are compositionally biased toward polar residues. The 123-residue stretch at 395-517 (TVLFCEIVNF…DTINTSSRMA (123 aa)) folds into the Guanylate cyclase 1 domain. 2 disordered regions span residues 598–619 (NNTI…THPN) and 672–838 (LTSP…GDDF). Residues 610–619 (GSATGPTHPN) show a composition bias toward polar residues. 3 stretches are compositionally biased toward low complexity: residues 672-684 (LTSP…PQQS), 693-712 (SPRL…SSST), and 720-765 (NNNN…NNNN). The span at 772-786 (SPISQNTTPTGSLSL) shows a compositional bias: polar residues. Transmembrane regions (helical) follow at residues 907-927 (ILAS…VDYF), 982-1002 (IITG…YVVS), 1016-1036 (VVMV…SVPP), 1040-1060 (IPLD…CYNF), 1061-1081 (SGIK…FIEI), and 1094-1114 (IYLS…ITSY). Residues 1168 to 1296 (TIFLSDIVGF…ESVQITQQME (129 aa)) form the Guanylate cyclase 2 domain. Mg(2+) is bound by residues aspartate 1173, isoleucine 1174, and aspartate 1217. Disordered regions lie at residues 1348 to 1369 (QPEV…SLQY) and 1393 to 1483 (NQND…SESS). The segment covering 1354–1369 (RSVSVSKSNFGGSLQY) has biased composition (polar residues). Positions 1405–1416 (NENGNESSSSNI) are enriched in low complexity. The segment covering 1432–1444 (NEDDESSYEDDQE) has biased composition (acidic residues). Residues 1446–1465 (NQYLNNSENNKNNNNNSNQI) are compositionally biased toward low complexity.

The protein belongs to the adenylyl cyclase class-4/guanylyl cyclase family. In terms of assembly, homodimer. Mg(2+) is required as a cofactor.

The protein resides in the membrane. The catalysed reaction is GTP = 3',5'-cyclic GMP + diphosphate. With respect to regulation, activated by guanosine 5'-3-O-(thio)triphosphate (GTPgammaS). Inhibited by calcium. Functionally, synthesizes cyclic GMP (cGMP) from GTP, after activation by heterotrimeric or monomeric G proteins. Involved in chemotaxis. This Dictyostelium discoideum (Social amoeba) protein is Guanylyl cyclase, membrane (gca).